The following is a 458-amino-acid chain: Bifunctional protein GlmU (458 aa).

The interval 1-229 (MNKFAIVLAA…FDESLGVNDR (229 aa)) is pyrophosphorylase. UDP-N-acetyl-alpha-D-glucosamine-binding positions include 8–11 (LAAG), K22, Q72, and 77–78 (GT). Mg(2+) is bound at residue D102. UDP-N-acetyl-alpha-D-glucosamine contacts are provided by G139, E154, N169, and N227. N227 is a binding site for Mg(2+). The segment at 230–250 (VALSQAEATMRKRINHEHMVN) is linker. An N-acetyltransferase region spans residues 251–458 (GVTLIDPATT…AKKMPHYRGQ (208 aa)). UDP-N-acetyl-alpha-D-glucosamine contacts are provided by R332 and K350. The active-site Proton acceptor is H362. 2 residues coordinate UDP-N-acetyl-alpha-D-glucosamine: Y365 and N376. The acetyl-CoA site is built by A379, S404, A422, and R439.

In the N-terminal section; belongs to the N-acetylglucosamine-1-phosphate uridyltransferase family. It in the C-terminal section; belongs to the transferase hexapeptide repeat family. As to quaternary structure, homotrimer. Requires Mg(2+) as cofactor.

Its subcellular location is the cytoplasm. It carries out the reaction alpha-D-glucosamine 1-phosphate + acetyl-CoA = N-acetyl-alpha-D-glucosamine 1-phosphate + CoA + H(+). The enzyme catalyses N-acetyl-alpha-D-glucosamine 1-phosphate + UTP + H(+) = UDP-N-acetyl-alpha-D-glucosamine + diphosphate. Its pathway is nucleotide-sugar biosynthesis; UDP-N-acetyl-alpha-D-glucosamine biosynthesis; N-acetyl-alpha-D-glucosamine 1-phosphate from alpha-D-glucosamine 6-phosphate (route II): step 2/2. It functions in the pathway nucleotide-sugar biosynthesis; UDP-N-acetyl-alpha-D-glucosamine biosynthesis; UDP-N-acetyl-alpha-D-glucosamine from N-acetyl-alpha-D-glucosamine 1-phosphate: step 1/1. It participates in bacterial outer membrane biogenesis; LPS lipid A biosynthesis. In terms of biological role, catalyzes the last two sequential reactions in the de novo biosynthetic pathway for UDP-N-acetylglucosamine (UDP-GlcNAc). The C-terminal domain catalyzes the transfer of acetyl group from acetyl coenzyme A to glucosamine-1-phosphate (GlcN-1-P) to produce N-acetylglucosamine-1-phosphate (GlcNAc-1-P), which is converted into UDP-GlcNAc by the transfer of uridine 5-monophosphate (from uridine 5-triphosphate), a reaction catalyzed by the N-terminal domain. The protein is Bifunctional protein GlmU of Lactococcus lactis subsp. cremoris (strain MG1363).